Here is a 61-residue protein sequence, read N- to C-terminus: Short neurotoxin 1 (61 aa).

The span at 1–16 (MECHNQQSSQPPTTKT) shows a compositional bias: polar residues. Residues 1 to 20 (MECHNQQSSQPPTTKTCPGE) form a disordered region. Disulfide bonds link cysteine 3–cysteine 23, cysteine 17–cysteine 40, cysteine 42–cysteine 53, and cysteine 54–cysteine 59.

It belongs to the three-finger toxin family. Short-chain subfamily. Type I alpha-neurotoxin sub-subfamily. As to expression, expressed by the venom gland.

It localises to the secreted. In terms of biological role, binds to muscle nicotinic acetylcholine receptor (nAChR) and inhibit acetylcholine from binding to the receptor, thereby impairing neuromuscular transmission. This Naja melanoleuca (Forest cobra) protein is Short neurotoxin 1.